Here is a 320-residue protein sequence, read N- to C-terminus: Olfactory receptor 52N1 (320 aa).

The Extracellular segment spans residues methionine 1–leucine 27. A glycan (N-linked (GlcNAc...) asparagine) is linked at asparagine 5. Residues tryptophan 28–methionine 48 traverse the membrane as a helical segment. The Cytoplasmic segment spans residues tyrosine 49 to alanine 56. Residues leucine 57–threonine 77 form a helical membrane-spanning segment. The Extracellular segment spans residues serine 78 to alanine 101. Residues cysteine 99 and cysteine 191 are joined by a disulfide bond. A helical membrane pass occupies residues glutamine 102–leucine 122. At aspartate 123 to serine 141 the chain is on the cytoplasmic side. The helical transmembrane segment at valine 142–threonine 162 threads the bilayer. At phenylalanine 163 to alanine 198 the chain is on the extracellular side. The helical transmembrane segment at isoleucine 199–serine 219 threads the bilayer. Residues tyrosine 220–alanine 239 lie on the Cytoplasmic side of the membrane. Residues phenylalanine 240–threonine 260 traverse the membrane as a helical segment. The Extracellular segment spans residues phenylalanine 261–histidine 276. A helical transmembrane segment spans residues isoleucine 277–valine 297. The Cytoplasmic segment spans residues lysine 298 to phenylalanine 320.

Belongs to the G-protein coupled receptor 1 family.

The protein localises to the cell membrane. Its function is as follows. Odorant receptor. The polypeptide is Olfactory receptor 52N1 (OR52N1) (Homo sapiens (Human)).